Reading from the N-terminus, the 483-residue chain is Glycogen synthase (483 aa).

Lysine 18 is a binding site for ADP-alpha-D-glucose.

The protein belongs to the glycosyltransferase 1 family. Bacterial/plant glycogen synthase subfamily.

The catalysed reaction is [(1-&gt;4)-alpha-D-glucosyl](n) + ADP-alpha-D-glucose = [(1-&gt;4)-alpha-D-glucosyl](n+1) + ADP + H(+). It functions in the pathway glycan biosynthesis; glycogen biosynthesis. In terms of biological role, synthesizes alpha-1,4-glucan chains using ADP-glucose. In Methylocella silvestris (strain DSM 15510 / CIP 108128 / LMG 27833 / NCIMB 13906 / BL2), this protein is Glycogen synthase.